The chain runs to 126 residues: Holo-[acyl-carrier-protein] synthase (126 aa).

The Mg(2+) site is built by aspartate 9 and glutamate 58.

This sequence belongs to the P-Pant transferase superfamily. AcpS family. The cofactor is Mg(2+).

Its subcellular location is the cytoplasm. The catalysed reaction is apo-[ACP] + CoA = holo-[ACP] + adenosine 3',5'-bisphosphate + H(+). Functionally, transfers the 4'-phosphopantetheine moiety from coenzyme A to a Ser of acyl-carrier-protein. This Pectobacterium carotovorum subsp. carotovorum (strain PC1) protein is Holo-[acyl-carrier-protein] synthase.